We begin with the raw amino-acid sequence, 324 residues long: Lipoyl synthase, chloroplastic (324 aa).

Low complexity-rich tracts occupy residues 1 to 12 (MCGPTATTVANA) and 20 to 29 (KGLPPGLKKP). Positions 1–30 (MCGPTATTVANAGTGGETIKGLPPGLKKPP) are disordered. Residues Cys-58, Cys-63, Cys-69, Cys-86, Cys-90, Cys-93, and Ser-302 each contribute to the [4Fe-4S] cluster site. In terms of domain architecture, Radical SAM core spans 72 to 291 (GDTGTATVML…AYGEEVIGFR (220 aa)).

This sequence belongs to the radical SAM superfamily. Lipoyl synthase family. The cofactor is [4Fe-4S] cluster.

It is found in the plastid. Its subcellular location is the chloroplast. The catalysed reaction is [[Fe-S] cluster scaffold protein carrying a second [4Fe-4S](2+) cluster] + N(6)-octanoyl-L-lysyl-[protein] + 2 oxidized [2Fe-2S]-[ferredoxin] + 2 S-adenosyl-L-methionine + 4 H(+) = [[Fe-S] cluster scaffold protein] + N(6)-[(R)-dihydrolipoyl]-L-lysyl-[protein] + 4 Fe(3+) + 2 hydrogen sulfide + 2 5'-deoxyadenosine + 2 L-methionine + 2 reduced [2Fe-2S]-[ferredoxin]. Its pathway is protein modification; protein lipoylation via endogenous pathway; protein N(6)-(lipoyl)lysine from octanoyl-[acyl-carrier-protein]: step 2/2. Its function is as follows. Catalyzes the radical-mediated insertion of two sulfur atoms into the C-6 and C-8 positions of the octanoyl moiety bound to the lipoyl domains of lipoate-dependent enzymes, thereby converting the octanoylated domains into lipoylated derivatives. The protein is Lipoyl synthase, chloroplastic of Ostreococcus lucimarinus (strain CCE9901).